We begin with the raw amino-acid sequence, 588 residues long: Lamin-B1 (588 aa).

The span at 1–12 shows a compositional bias: polar residues; it reads MATATPVQQQRA. The interval 1–34 is disordered; that stretch reads MATATPVQQQRAGSRASAPATPLSPTRLSRLQEK. N-acetylalanine is present on Ala2. The head stretch occupies residues 2-35; it reads ATATPVQQQRAGSRASAPATPLSPTRLSRLQEKE. Thr3 and Thr5 each carry phosphothreonine. Residue Arg15 is modified to Omega-N-methylarginine. A Phosphoserine modification is found at Ser17. Position 21 is a phosphothreonine (Thr21). At Ser24 the chain carries Phosphoserine. Thr26 is modified (phosphothreonine). Position 29 is a phosphoserine (Ser29). The region spanning 33–389 is the IF rod domain; that stretch reads EKEELRELND…KLLEGEEERL (357 aa). The segment at 36-70 is coil 1A; the sequence is ELRELNDRLAVYIDKVRSLETENSALQLQVTEREE. The linker 1 stretch occupies residues 71–82; it reads VRGRELTGLKAL. The segment at 83–216 is coil 1B; the sequence is YETELADARR…EFRKNMYEEE (134 aa). A Glycyl lysine isopeptide (Lys-Gly) (interchain with G-Cter in SUMO2) cross-link involves residue Lys103. Residue Lys112 is modified to N6-acetyllysine. Lys124 participates in a covalent cross-link: Glycyl lysine isopeptide (Lys-Gly) (interchain with G-Cter in SUMO2). Position 127 is a phosphoserine (Ser127). Residue Lys146 forms a Glycyl lysine isopeptide (Lys-Gly) (interchain with G-Cter in SUMO2) linkage. Lys158 bears the N6-acetyllysine; alternate mark. Lys158 participates in a covalent cross-link: Glycyl lysine isopeptide (Lys-Gly) (interchain with G-Cter in SUMO2); alternate. A Phosphoserine modification is found at Ser159. Residue Lys182 forms a Glycyl lysine isopeptide (Lys-Gly) (interchain with G-Cter in SUMO2) linkage. Phosphoserine is present on residues Ser201 and Ser233. Positions 217 to 244 are linker 2; sequence INETRRKHETRLVEVDSGRQIEYEYKLA. Residues Lys242 and Lys262 each participate in a glycyl lysine isopeptide (Lys-Gly) (interchain with G-Cter in SUMO2) cross-link. The segment at 245–387 is coil 2; the sequence is QALHEMREQH…YRKLLEGEEE (143 aa). Lys272 carries the post-translational modification N6-acetyllysine; alternate. Lys272 participates in a covalent cross-link: Glycyl lysine isopeptide (Lys-Gly) (interchain with G-Cter in SUMO2); alternate. 2 positions are modified to phosphoserine: Ser279 and Ser303. Lys313 participates in a covalent cross-link: Glycyl lysine isopeptide (Lys-Gly) (interchain with G-Cter in SUMO2). Lys331 carries the N6-acetyllysine; alternate modification. Lys331 participates in a covalent cross-link: Glycyl lysine isopeptide (Lys-Gly) (interchain with G-Cter in SUMO2); alternate. A phosphoserine mark is found at Ser376 and Ser394. A tail region spans residues 388–588; that stretch reads RLKLSPSPSS…RASNKSCAIM (201 aa). Over residues 391–410 the composition is skewed to low complexity; the sequence is LSPSPSSRVTVSRASSSRSV. Residues 391-433 are disordered; that stretch reads LSPSPSSRVTVSRASSSRSVRTTRGKRKRVDVEESEASSSVSI. Thr400 carries O-linked (GlcNAc) threonine glycosylation. Arg414 bears the Omega-N-methylarginine mark. Residues 416–421 carry the Nuclear localization signal motif; sequence KRKRVD. The region spanning 431–547 is the LTD domain; it reads VSISHSASAT…EEVAQRSTVF (117 aa). Position 484 is an N6-acetyllysine (Lys484). Lys533 participates in a covalent cross-link: Glycyl lysine isopeptide (Lys-Gly) (interchain with G-Cter in SUMO2). Ser535 is modified (phosphoserine). Lys548 participates in a covalent cross-link: Glycyl lysine isopeptide (Lys-Gly) (interchain with G-Cter in SUMO2). At Cys585 the chain carries Cysteine methyl ester. Cys585 carries the S-farnesyl cysteine lipid modification. Positions 586-588 are cleaved as a propeptide — removed in mature form; sequence AIM.

Belongs to the intermediate filament family. As to quaternary structure, homodimer. Lamin dimers then assemble into dimeric head-to-tail polymers. Ultimately, two head-to-tail polymers assemble laterally into a protofilament with a uniformly shaped rod of 3.5 nm in diameter. Interacts with SPAG4 and SEPT12. B-type lamins undergo a series of modifications, such as farnesylation and phosphorylation. Increased phosphorylation of the lamins occurs before envelope disintegration and probably plays a role in regulating lamin associations. In terms of processing, phosphorylation plays a key role in lamin organization, subcellular localization and nuclear envelope disintegration. Phosphorylation by CDK1 at Ser-24 and Ser-394 at the onset of mitosis drives lamin disassembly and nuclear envelope breakdown.

It localises to the nucleus lamina. Lamins are intermediate filament proteins that assemble into a filamentous meshwork, and which constitute the major components of the nuclear lamina, a fibrous layer on the nucleoplasmic side of the inner nuclear membrane. Lamins provide a framework for the nuclear envelope, bridging the nuclear envelope and chromatin, thereby playing an important role in nuclear assembly, chromatin organization, nuclear membrane and telomere dynamics. The structural integrity of the lamina is strictly controlled by the cell cycle, as seen by the disintegration and formation of the nuclear envelope in prophase and telophase, respectively. The polypeptide is Lamin-B1 (Lmnb1) (Mus musculus (Mouse)).